The sequence spans 196 residues: Peptidyl-tRNA hydrolase (196 aa).

Residue tyrosine 19 participates in tRNA binding. The Proton acceptor role is filled by histidine 24. Residues tyrosine 68, asparagine 70, and asparagine 116 each coordinate tRNA.

The protein belongs to the PTH family. As to quaternary structure, monomer.

Its subcellular location is the cytoplasm. It catalyses the reaction an N-acyl-L-alpha-aminoacyl-tRNA + H2O = an N-acyl-L-amino acid + a tRNA + H(+). Functionally, hydrolyzes ribosome-free peptidyl-tRNAs (with 1 or more amino acids incorporated), which drop off the ribosome during protein synthesis, or as a result of ribosome stalling. In terms of biological role, catalyzes the release of premature peptidyl moieties from peptidyl-tRNA molecules trapped in stalled 50S ribosomal subunits, and thus maintains levels of free tRNAs and 50S ribosomes. The sequence is that of Peptidyl-tRNA hydrolase from Aromatoleum aromaticum (strain DSM 19018 / LMG 30748 / EbN1) (Azoarcus sp. (strain EbN1)).